Consider the following 49-residue polypeptide: Large ribosomal subunit protein bL32 (49 aa).

The protein belongs to the bacterial ribosomal protein bL32 family.

This Nitratiruptor sp. (strain SB155-2) protein is Large ribosomal subunit protein bL32.